The sequence spans 576 residues: V-type ATP synthase alpha chain (576 aa).

Residue 238–245 participates in ATP binding; sequence GPFGAGKT.

This sequence belongs to the ATPase alpha/beta chains family.

It carries out the reaction ATP + H2O + 4 H(+)(in) = ADP + phosphate + 5 H(+)(out). Functionally, produces ATP from ADP in the presence of a proton gradient across the membrane. The V-type alpha chain is a catalytic subunit. The protein is V-type ATP synthase alpha chain of Borrelia recurrentis (strain A1).